Reading from the N-terminus, the 883-residue chain is Alanine--tRNA ligase (883 aa).

His563, His567, Cys677, and His681 together coordinate Zn(2+).

This sequence belongs to the class-II aminoacyl-tRNA synthetase family. Zn(2+) is required as a cofactor.

Its subcellular location is the cytoplasm. It catalyses the reaction tRNA(Ala) + L-alanine + ATP = L-alanyl-tRNA(Ala) + AMP + diphosphate. Catalyzes the attachment of alanine to tRNA(Ala) in a two-step reaction: alanine is first activated by ATP to form Ala-AMP and then transferred to the acceptor end of tRNA(Ala). Also edits incorrectly charged Ser-tRNA(Ala) and Gly-tRNA(Ala) via its editing domain. This chain is Alanine--tRNA ligase, found in Cereibacter sphaeroides (strain ATCC 17029 / ATH 2.4.9) (Rhodobacter sphaeroides).